We begin with the raw amino-acid sequence, 308 residues long: Taste receptor type 2 member 46 (308 aa).

Methionine 1 is a topological domain (extracellular). A helical transmembrane segment spans residues 2 to 22 (ITFLSITFSILVGVIFVIGNF). The Cytoplasmic segment spans residues 23–46 (ANGFIALVNSIEWVKRQKISFADQ). The helical transmembrane segment at 47–67 (ILTGLAVSRVGLLWVLLLHLY) threads the bilayer. At 68-86 (ATEFNLAFYSVEVRITAYN) the chain is on the extracellular side. A helical membrane pass occupies residues 87–107 (VWIVTNHFSNWLSTSLSMFYL). Residues 108 to 126 (LKIATFSNLIFLHLKRKVK) are Cytoplasmic-facing. The helical transmembrane segment at 127 to 147 (SVILVTLLGPLLFLVCHLFVM) threads the bilayer. Topologically, residues 148–178 (NMNHIVWRKEYEGNITWRIKLRSAMYLSNVT) are extracellular. N-linked (GlcNAc...) asparagine glycans are attached at residues asparagine 161 and asparagine 176. The chain crosses the membrane as a helical span at residues 179–199 (VTMLANLIPLTLTLMSFLLLI). Over 200 to 229 (CSLCKHLKKMQVHGKGSQDPSTKVHIKALQ) the chain is Cytoplasmic. Residues 230-250 (TVTSFLLLCAIYFLSMILSVW) traverse the membrane as a helical segment. Residues 251 to 258 (NFELEKKP) are Extracellular-facing. Residues 259 to 279 (VFMFCQAVIFSYPSTHPLILI) form a helical membrane-spanning segment. At 280–308 (WGNKKLKQIFLSVLWNVRYWVKGQKPSSP) the chain is on the cytoplasmic side.

This sequence belongs to the G-protein coupled receptor T2R family.

It is found in the membrane. It localises to the cell projection. The protein localises to the cilium membrane. Receptor that may play a role in the perception of bitterness and is gustducin-linked. May play a role in sensing the chemical composition of the gastrointestinal content. The activity of this receptor may stimulate alpha gustducin, mediate PLC-beta-2 activation and lead to the gating of TRPM5. In airway epithelial cells, binding of bitter compounds increases the intracellular calcium ion concentration and stimulates ciliary beat frequency. This chain is Taste receptor type 2 member 46 (TAS2R46), found in Macaca mulatta (Rhesus macaque).